The primary structure comprises 748 residues: LPS-assembly protein LptD (748 aa).

The first 19 residues, 1-19, serve as a signal peptide directing secretion; it reads MSKTWGILMLSVLSAPSLA.

It belongs to the LptD family. As to quaternary structure, component of the lipopolysaccharide transport and assembly complex. Interacts with LptE and LptA.

It localises to the cell outer membrane. Functionally, together with LptE, is involved in the assembly of lipopolysaccharide (LPS) at the surface of the outer membrane. The polypeptide is LPS-assembly protein LptD (Pseudoalteromonas translucida (strain TAC 125)).